The primary structure comprises 126 residues: Prefoldin subunit beta (126 aa).

It belongs to the prefoldin subunit beta family. Heterohexamer of two alpha and four beta subunits.

The protein localises to the cytoplasm. Functionally, molecular chaperone capable of stabilizing a range of proteins. Seems to fulfill an ATP-independent, HSP70-like function in archaeal de novo protein folding. The polypeptide is Prefoldin subunit beta (Methanocella arvoryzae (strain DSM 22066 / NBRC 105507 / MRE50)).